The following is a 239-amino-acid chain: Ribonuclease P protein component 3 (239 aa).

The protein belongs to the eukaryotic/archaeal RNase P protein component 3 family. In terms of assembly, consists of a catalytic RNA component and at least 4-5 protein subunits.

It localises to the cytoplasm. It carries out the reaction Endonucleolytic cleavage of RNA, removing 5'-extranucleotides from tRNA precursor.. Functionally, part of ribonuclease P, a protein complex that generates mature tRNA molecules by cleaving their 5'-ends. The chain is Ribonuclease P protein component 3 from Methanosarcina barkeri (strain Fusaro / DSM 804).